Reading from the N-terminus, the 693-residue chain is MAQGSHQIDFQVLHDLRQKFPEVPEVVVSRCMLQNNNNLDACCAVLSQESTRYLYGEGDLNFSDDSGISGLRNHMTSLNLDLQSQNIYHHGREGSRMNGSRTLTHSISDGQLQGGQSNSELFQQEPQTAPAQVPQGFNVFGMSSSSGASNSAPHLGFHLGSKGTSSLSQQTPRFNPIMVTLAPNIQTGRNTPTSLHIHGVPPPVLNSPQGNSIYIRPYITTPGGTTRQTQQHSGWVSQFNPMNPQQVYQPSQPGPWTTCPASNPLSHTSSQQPNQQGHQTSHVYMPISSPTTSQPPTIHSSGSSQSSAHSQYNIQNISTGPRKNQIEIKLEPPQRNNSSKLRSSGPRTSSTSSSVNSQTLNRNQPTVYIAASPPNTDELMSRSQPKVYISANAATGDEQVMRNQPTLFISTNSGASAASRNMSGQVSMGPAFIHHHPPKSRAIGNNSATSPRVVVTQPNTKYTFKITVSPNKPPAVSPGVVSPTFELTNLLNHPDHYVETENIQHLTDPTLAHVDRISETRKLSMGSDDAAYTQALLVHQKARMERLQRELEIQKKKLDKLKSEVNEMENNLTRRRLKRSNSISQIPSLEEMQQLRSCNRQLQIDIDCLTKEIDLFQARGPHFNPSAIHNFYDNIGFVGPVPPKPKDQRSIIKTPKTQDTEDDEGAQWNCTACTFLNHPALIRCEQCEMPRHF.

Residues 8–51 (IDFQVLHDLRQKFPEVPEVVVSRCMLQNNNNLDACCAVLSQEST) enclose the CUE domain. The interval 91–130 (GREGSRMNGSRTLTHSISDGQLQGGQSNSELFQQEPQTAP) is disordered. A compositionally biased stretch (polar residues) spans 97-130 (MNGSRTLTHSISDGQLQGGQSNSELFQQEPQTAP). R173 is subject to Asymmetric dimethylarginine. Positions 219–310 (ITTPGGTTRQ…SGSSQSSAHS (92 aa)) are disordered. A compositionally biased stretch (low complexity) spans 220-231 (TTPGGTTRQTQQ). Positions 232–282 (HSGWVSQFNPMNPQQVYQPSQPGPWTTCPASNPLSHTSSQQPNQQGHQTSH) are enriched in polar residues. Residues 286–310 (PISSPTTSQPPTIHSSGSSQSSAHS) are compositionally biased toward low complexity. K329 participates in a covalent cross-link: Glycyl lysine isopeptide (Lys-Gly) (interchain with G-Cter in SUMO). The tract at residues 330 to 381 (LEPPQRNNSSKLRSSGPRTSSTSSSVNSQTLNRNQPTVYIAASPPNTDELMS) is disordered. Residues 343-359 (SSGPRTSSTSSSVNSQT) are compositionally biased toward low complexity. Residues S372, S450, S482, and S524 each carry the phosphoserine modification. Residues 532-619 (YTQALLVHQK…TKEIDLFQAR (88 aa)) are a coiled coil. K562 participates in a covalent cross-link: Glycyl lysine isopeptide (Lys-Gly) (interchain with G-Cter in SUMO). Position 582 is a phosphoserine (S582). Residue K611 forms a Glycyl lysine isopeptide (Lys-Gly) (interchain with G-Cter in ubiquitin) linkage. The tract at residues 642–663 (PPKPKDQRSIIKTPKTQDTEDD) is disordered. The RanBP2-type zinc-finger motif lies at 663 to 693 (DEGAQWNCTACTFLNHPALIRCEQCEMPRHF). C673 bears the (Microbial infection) S-methylcysteine mark. Residues 675 to 685 (FLNHPALIRCE) are interaction with polyubiquitin.

In terms of assembly, interacts with MAP3K7 and TRAF6. Identified in the TRIKA2 complex composed of MAP3K7, TAB1 and TAB2. Binds 'Lys-63'-linked polyubiquitin chains. Interacts with NCOR1 and HDAC3 to form a ternary complex. Interacts (via C-terminal) with NUMBL (via PTB domain). Interacts (via the C-terminus) with DYNC2I2 (via WD domains). Interacts with RBCK1. Interacts with TRIM5. Interacts with TRIM38 (via B30.2/SPRY domain), leading to its translocation to lysosomes and degradation. Interacts with ASB1; this interaction promotes TAB2 stability. In terms of processing, degraded in a lysosome-dependent manner following interaction with TRIM38. SUMOylated by TRIM60; leading to inhibition of MAPK/NF-kappaB activation and the innate immune response. Post-translationally, ubiquitinated; following IL1 stimulation or TRAF6 overexpression. Ubiquitination involves RBCK1 leading to proteasomal degradation. Ubiquitinated at Lys-611 by TRIM45 leading to proteasomal degradation. In terms of processing, phosphorylated. (Microbial infection) Methylated at Cys-673 by enteropathogenic E.coli protein NleE or S.flexneri protein OspZ: methylation disrupts zinc-binding and ability to bind 'Lys-63'-linked ubiquitin, leading to NF-kappa-B inactivation. As to expression, widely expressed. In the embryo, expressed in the ventricular trabeculae, endothelial cells of the conotruncal cushions of the outflow tract and in the endothelial cells lining the developing aortic valves.

Its subcellular location is the membrane. The protein localises to the endosome membrane. It is found in the lysosome membrane. It localises to the cytoplasm. The protein resides in the cytosol. Functionally, adapter required to activate the JNK and NF-kappa-B signaling pathways through the specific recognition of 'Lys-63'-linked polyubiquitin chains by its RanBP2-type zinc finger (NZF). Acts as an adapter linking MAP3K7/TAK1 and TRAF6 to 'Lys-63'-linked polyubiquitin chains. The RanBP2-type zinc finger (NZF) specifically recognizes Lys-63'-linked polyubiquitin chains unanchored or anchored to the substrate proteins such as RIPK1/RIP1 and RIPK2: this acts as a scaffold to organize a large signaling complex to promote autophosphorylation of MAP3K7/TAK1, and subsequent activation of I-kappa-B-kinase (IKK) core complex by MAP3K7/TAK1. Also recognizes and binds Lys-63'-linked polyubiquitin chains of heterotypic 'Lys-63'-/'Lys-48'-linked branched ubiquitin chains. Regulates the IL1-mediated translocation of NCOR1 out of the nucleus. Involved in heart development. This is TGF-beta-activated kinase 1 and MAP3K7-binding protein 2 from Homo sapiens (Human).